The primary structure comprises 367 residues: Alanine racemase (367 aa).

K35 acts as the Proton acceptor; specific for D-alanine in catalysis. Residue K35 is modified to N6-(pyridoxal phosphate)lysine. Position 130 (R130) interacts with substrate. Y258 (proton acceptor; specific for L-alanine) is an active-site residue. M306 provides a ligand contact to substrate.

Belongs to the alanine racemase family. Pyridoxal 5'-phosphate serves as cofactor.

It catalyses the reaction L-alanine = D-alanine. It functions in the pathway amino-acid biosynthesis; D-alanine biosynthesis; D-alanine from L-alanine: step 1/1. Functionally, catalyzes the interconversion of L-alanine and D-alanine. May also act on other amino acids. This chain is Alanine racemase (alr), found in Acinetobacter baumannii (strain SDF).